The primary structure comprises 197 residues: Probable GTP-binding protein EngB (197 aa).

An EngB-type G domain is found at 22–197 (TGVEVAFAGR…FKEKLDTWYQ (176 aa)). Residues 30–37 (GRSNAGKS), 57–61 (GRTQL), 75–78 (DLPG), 142–145 (TKAD), and 177–179 (FSS) contribute to the GTP site. Mg(2+) contacts are provided by Ser37 and Thr59.

This sequence belongs to the TRAFAC class TrmE-Era-EngA-EngB-Septin-like GTPase superfamily. EngB GTPase family. Requires Mg(2+) as cofactor.

Necessary for normal cell division and for the maintenance of normal septation. The chain is Probable GTP-binding protein EngB from Francisella tularensis subsp. holarctica (strain FTNF002-00 / FTA).